Here is a 299-residue protein sequence, read N- to C-terminus: Transcription factor BHLH148 (299 aa).

Residues 90–127 (RMGGGGGGGEKGEGEEMEEEEEVPQRRRRGQGADVESS) form a disordered region. Over residues 102–111 (EGEEMEEEEE) the composition is skewed to acidic residues. The interval 127 to 140 (SRGFRHMMRERQRR) is basic motif; degenerate. The bHLH domain maps to 127 to 176 (SRGFRHMMRERQRREKLSQSYADLYAMVSSRSKGDKNSIVQSAAIYIHEL). Residues 141–176 (EKLSQSYADLYAMVSSRSKGDKNSIVQSAAIYIHEL) form a helix-loop-helix motif region. The interval 273-299 (ERNQPDSDAPFPGSKGWTQTSHVQNVF) is disordered. Over residues 288–299 (GWTQTSHVQNVF) the composition is skewed to polar residues.

Belongs to the bHLH protein family. As to quaternary structure, interacts with TIFY10A/JAZ6, TIFY10B/JAZ7, TIFY11A/JAZ9, TIFY11C/JAZ11, and TIFY11D/JAZ12.

It is found in the nucleus. Functionally, may act on an initial response of jasmonate-regulated gene expression toward drought tolerance as part of a BHLH148-TIFY11D/JAZ12-COI1A complex. The sequence is that of Transcription factor BHLH148 from Oryza sativa subsp. japonica (Rice).